Here is a 527-residue protein sequence, read N- to C-terminus: Cytochrome P450 monooxygenase olcJ (527 aa).

A helical transmembrane segment spans residues 21 to 43 (GLLTRYNVFMAISITVTALYLIH). Heme is bound at residue Cys464.

Belongs to the cytochrome P450 family. Heme is required as a cofactor.

It is found in the membrane. The protein operates within secondary metabolite biosynthesis; terpenoid biosynthesis. Cytochrome P450 monooxygenase; part of the gene cluster that mediates the biosynthesis of 15-deoxyoxalicine B. The first step of the pathway is the synthesis of nicotinyl-CoA from nicotinic acid by the nicotinic acid-CoA ligase olcI. Nicotinyl-CoA is then a substrate of polyketide synthase olcA to produce 4-hydroxy-6-(3-pyridinyl)-2H-pyran-2-one (HPPO) which is further prenylated by the polyprenyl transferase olcH to yield geranylgeranyl-HPPO. Geranylgeranyl pyrophosphate is provided by the cluster-specific geranylgeranyl pyrophosphate synthase olcC. The FAD-dependent monooxygenase olcE catalyzes the epoxidation of geranylgeranyl-HPPO and the terpene cyclase olcD catalyzes the cyclization of the terpenoid component, resulting in the formation of the tricyclic terpene moiety seen in predecaturin E. The cytochrome P450 monooxygenase then catalyzes the allylic oxidation of predecaturin E, which is followed by spirocylization with concomitant loss of one molecule of water to form decaturin E. Decaturin E is the substrate of the cytochrome P450 monooxygenase olcJ which hydroxylates it at the C-29 position to form decaturin F. The short-chain dehydrogenase/reductase olcF may catalyze the oxidation of decaturin F to generate the 29-hydroxyl-27-one intermediate, and subsequent hemiacetal formation probably leads to the formation of decaturin C. The dioxygenase olcK may be a peroxisomal enzyme that catalyzes the hydroxylation of decaturin C into decaturin A once decaturin C is shuttled into the peroxisome by the MFS transporter olcL. Finally the cytochrome P450 monooxygenase olcB catalyzes the oxidative rearrangement to yield 15-deoxyoxalicine B. In the absence of olcJ, decaturin E may be shunted to a pathway in which it is oxidized to a ketone, possibly by olcF, to form decaturin D, which undergoes further allylic oxidation to yield decaturin G. Moreover, in the absence of oclK or oclL, oclB can convert decaturin C into 15-deoxyoxalicine A. This Penicillium canescens protein is Cytochrome P450 monooxygenase olcJ.